We begin with the raw amino-acid sequence, 170 residues long: Small ribosomal subunit protein bS18c (170 aa).

2 disordered regions span residues Met-1–Gly-59 and Asn-151–Cys-170. Repeats lie at residues Ser-4 to Lys-10, Ser-11 to Lys-17, Ser-18 to Lys-24, Ser-25 to Lys-31, Phe-32 to Lys-38, Ser-39 to Lys-45, and Ser-46 to Arg-52. Positions Ser-4–Arg-52 are 7 X 7 AA tandem repeats. The segment covering Pro-7–Arg-55 has biased composition (basic residues).

The protein belongs to the bacterial ribosomal protein bS18 family. In terms of assembly, part of the 30S ribosomal subunit.

It localises to the plastid. The protein localises to the chloroplast. This chain is Small ribosomal subunit protein bS18c (rps18), found in Zea mays (Maize).